Reading from the N-terminus, the 117-residue chain is Ribosome-binding factor A (117 aa).

The protein belongs to the RbfA family. Monomer. Binds 30S ribosomal subunits, but not 50S ribosomal subunits or 70S ribosomes.

The protein localises to the cytoplasm. One of several proteins that assist in the late maturation steps of the functional core of the 30S ribosomal subunit. Associates with free 30S ribosomal subunits (but not with 30S subunits that are part of 70S ribosomes or polysomes). Required for efficient processing of 16S rRNA. May interact with the 5'-terminal helix region of 16S rRNA. This chain is Ribosome-binding factor A, found in Bacillus licheniformis (strain ATCC 14580 / DSM 13 / JCM 2505 / CCUG 7422 / NBRC 12200 / NCIMB 9375 / NCTC 10341 / NRRL NRS-1264 / Gibson 46).